The following is a 181-amino-acid chain: ADP-ribosylation factor-like protein 1 (181 aa).

Gly-2 carries N-myristoyl glycine lipidation. GTP is bound by residues 24–31 (GLDGAGKT), 45–48 (TIPT), Gly-70, 126–129 (NKQD), and 160–161 (AT). Residues Thr-31 and Thr-48 each coordinate Mg(2+).

The protein belongs to the small GTPase superfamily. Arf family. In terms of assembly, the GTP-bound form interacts with GOLGA1. The GTP-bound form interacts with GOLGA4 and RGPD8. The GTP-bound form directly interacts with ARFIP2. Binds to SCOC, preferentially in its GTP-bound form. May interact with UNC119. Interacts with ARFIP1; this interaction directs ARFIP1 to the trans-Golgi membranes. Interacts with ARFGEF1 (via N-terminus). Detected in heart, liver, lung and liver (at protein level). Detected in fetal heart, lung, liver and kidney. Detected in adult heart, placenta, lung, liver, skeletal muscle, kidney and pancreas.

It localises to the golgi apparatus membrane. The protein localises to the golgi apparatus. It is found in the trans-Golgi network membrane. Its subcellular location is the membrane. Functionally, GTP-binding protein that recruits several effectors, such as golgins, arfaptins and Arf-GEFs to the trans-Golgi network, and modulates their functions at the Golgi complex. Plays thereby a role in a wide range of fundamental cellular processes, including cell polarity, innate immunity, or protein secretion mediated by arfaptins, which were shown to play a role in maintaining insulin secretion from pancreatic beta cells. The polypeptide is ADP-ribosylation factor-like protein 1 (ARL1) (Homo sapiens (Human)).